A 365-amino-acid chain; its full sequence is MKFIDEARIEAIAGNGGNGSASFRREKFVPFGGPDGGDGGRGGSVFAVADRNINTLIDFRYARKHVARNGENGRGSDCYGAAGEDITLRMPVGTLITDMDTGEVIADLTEHGQRVCLAEGGMGGWGNLHFKSSTNRAPRQQVDGKPGERRMLKLELKVLADVGLLGMPNAGKSTFISHISNARPKVADYPFTTLHPNLGVVRVDHEQSFVVADIPGLIEGAAEGAGLGHQFLRHLQRTGLLLHIVDLAPFDEAVDPVAEAKAIVNELKKYDETLYDKPRWLVLNKLDVVPEDERAARVKDFIKRYKWKGPVFQISALTGEGCRELIYAIKDHLQAIKAEEAAALAEPDIRLDERLHNVDQGQGEA.

The Obg domain maps to 1–159 (MKFIDEARIE…RMLKLELKVL (159 aa)). The OBG-type G domain maps to 160-334 (ADVGLLGMPN…LIYAIKDHLQ (175 aa)). GTP contacts are provided by residues 166 to 173 (GMPNAGKS), 191 to 195 (FTTLH), 213 to 216 (DIPG), 284 to 287 (NKLD), and 315 to 317 (SAL). Serine 173 and threonine 193 together coordinate Mg(2+).

This sequence belongs to the TRAFAC class OBG-HflX-like GTPase superfamily. OBG GTPase family. In terms of assembly, monomer. It depends on Mg(2+) as a cofactor.

The protein localises to the cytoplasm. In terms of biological role, an essential GTPase which binds GTP, GDP and possibly (p)ppGpp with moderate affinity, with high nucleotide exchange rates and a fairly low GTP hydrolysis rate. Plays a role in control of the cell cycle, stress response, ribosome biogenesis and in those bacteria that undergo differentiation, in morphogenesis control. The sequence is that of GTPase Obg from Cupriavidus necator (strain ATCC 17699 / DSM 428 / KCTC 22496 / NCIMB 10442 / H16 / Stanier 337) (Ralstonia eutropha).